Reading from the N-terminus, the 530-residue chain is MEEDSLYLGGEWQFNHFSKLTSSRPDAAFAEIQRTSLPEKSPLSCETRVDLCDDLAPVARQLAPREKLPLSSRRPAAVGAGLQNMGNTCYVNASLQCLTYTPPLANYMLSREHSQTCHRHKGCMLCTMQAHITRALHNPGHVIQPSQALAAGFHRGKQEDAHEFLMFTVDAMKKACLPGHKQVDHHSKDTTLIHQIFGGYWRSQIKCLHCHGISDTFDPYLDIALDIQAAQSVQQALEQLVKPEELNGENAYHCGVCLQRAPASKTLTLHTSAKVLILVLKRFSDVTGNKIAKNVQYPECLDMQPYMSQTNTGPLVYVLYAVLVHAGWSCHNGHYFSYVKAQEGQWYKMDDAEVTASSITSVLSQQAYVLFYIQKSEWERHSESVSRGREPRALGAEDTDRRATQGELKRDHPCLQAPELDEHLVERATQESTLDHWKFLQEQNKTKPEFNVRKVEGTLPPDVLVIHQSKYKCGMKNHHPEQQSSLLKLSSTTPTHQESMNTGTLASLRGRARRSKGKNKHSKRALLVCQ.

In terms of domain architecture, USP spans 80–375; sequence AGLQNMGNTC…QAYVLFYIQK (296 aa). The Nucleophile role is filled by Cys-89. His-334 (proton acceptor) is an active-site residue. Composition is skewed to basic and acidic residues over residues 382–392 and 398–413; these read SESVSRGREPR and DTDR…RDHP. Disordered regions lie at residues 382 to 413 and 476 to 530; these read SESV…RDHP and KNHH…LVCQ. Low complexity predominate over residues 484-495; sequence SSLLKLSSTTPT. Positions 496-505 are enriched in polar residues; sequence HQESMNTGTL. A compositionally biased stretch (basic residues) spans 510-524; sequence GRARRSKGKNKHSKR.

This sequence belongs to the peptidase C19 family. USP17 subfamily.

The protein localises to the nucleus. The protein resides in the endoplasmic reticulum. The enzyme catalyses Thiol-dependent hydrolysis of ester, thioester, amide, peptide and isopeptide bonds formed by the C-terminal Gly of ubiquitin (a 76-residue protein attached to proteins as an intracellular targeting signal).. Deubiquitinating enzyme that removes conjugated ubiquitin from specific proteins to regulate different cellular processes that may include cell proliferation, progression through the cell cycle, apoptosis, cell migration, and the cellular response to viral infection. The sequence is that of Ubiquitin carboxyl-terminal hydrolase 17-like protein 19 (USP17L19) from Homo sapiens (Human).